Here is a 61-residue protein sequence, read N- to C-terminus: Small ribosomal subunit protein uS14 (61 aa).

Zn(2+) contacts are provided by Cys-24, Cys-27, Cys-40, and Cys-43.

It belongs to the universal ribosomal protein uS14 family. Zinc-binding uS14 subfamily. In terms of assembly, part of the 30S ribosomal subunit. Contacts proteins S3 and S10. The cofactor is Zn(2+).

In terms of biological role, binds 16S rRNA, required for the assembly of 30S particles and may also be responsible for determining the conformation of the 16S rRNA at the A site. The polypeptide is Small ribosomal subunit protein uS14 (Aliarcobacter butzleri (strain RM4018) (Arcobacter butzleri)).